The following is a 97-amino-acid chain: uncharacterized protein (97 aa).

This is an uncharacterized protein from Methanocaldococcus jannaschii (strain ATCC 43067 / DSM 2661 / JAL-1 / JCM 10045 / NBRC 100440) (Methanococcus jannaschii).